Here is a 528-residue protein sequence, read N- to C-terminus: MAATKASTATDEPVKRTATKSPAASASGAKTGAKRTAAKSASGSPPAKRATKPAARSVKPASAPQDTTTSTIPKRKTRAAAKSAAAKAPSARGHATKPRAPKDAQHEAATDPEDALDSVEELDAEPDLDVEPGEDLDLDAADLNLDDLEDDVAPDADDDLDSGDDEDHEDLEAEAAVAPGQTADDDEEIAEPTEKDKASGDFVWDEDESEALRQARKDAELTASADSVRAYLKQIGKVALLNAEEEVELAKRIEAGLYATQLMTELSERGEKLPAAQRRDMMWICRDGDRAKNHLLEANLRLVVSLAKRYTGRGMAFLDLIQEGNLGLIRAVEKFDYTKGYKFSTYATWWIRQAITRAMADQARTIRIPVHMVEVINKLGRIQRELLQDLGREPTPEELAKEMDITPEKVLEIQQYAREPISLDQTIGDEGDSQLGDFIEDSEAVVAVDAVSFTLLQDQLQSVLDTLSEREAGVVRLRFGLTDGQPRTLDEIGQVYGVTRERIRQIESKTMSKLRHPSRSQVLRDYLD.

Residues 1-10 show a composition bias toward polar residues; it reads MAATKASTAT. The segment at 1 to 211 is disordered; the sequence is MAATKASTAT…FVWDEDESEA (211 aa). Low complexity-rich tracts occupy residues 19–31, 38–56, and 80–92; these read TKSP…GAKT, AKSA…PAAR, and AAKS…PSAR. Residues 100–109 are compositionally biased toward basic and acidic residues; the sequence is APKDAQHEAA. The span at 110-173 shows a compositional bias: acidic residues; that stretch reads TDPEDALDSV…DDEDHEDLEA (64 aa). The sigma-70 factor domain-2 stretch occupies residues 295–365; it reads LLEANLRLVV…TRAMADQART (71 aa). The Interaction with polymerase core subunit RpoC signature appears at 319 to 322; it reads DLIQ. The tract at residues 374–450 is sigma-70 factor domain-3; sequence EVINKLGRIQ…DSEAVVAVDA (77 aa). Residues 463–516 are sigma-70 factor domain-4; the sequence is VLDTLSEREAGVVRLRFGLTDGQPRTLDEIGQVYGVTRERIRQIESKTMSKLRH. Residues 489 to 508 constitute a DNA-binding region (H-T-H motif); sequence LDEIGQVYGVTRERIRQIES.

This sequence belongs to the sigma-70 factor family. RpoD/SigA subfamily. Interacts transiently with the RNA polymerase catalytic core.

It is found in the cytoplasm. Functionally, sigma factors are initiation factors that promote the attachment of RNA polymerase to specific initiation sites and are then released. This sigma factor is the primary sigma factor during exponential growth. The chain is RNA polymerase sigma factor SigA from Mycobacterium bovis (strain ATCC BAA-935 / AF2122/97).